The chain runs to 714 residues: Putative glutamine--fructose-6-phosphate aminotransferase [isomerizing] (714 aa).

The active-site Nucleophile; for GATase activity is C2. Residues 2–321 form the Glutamine amidotransferase type-2 domain; the sequence is CGIFGYCNFL…DNDIAHIYDG (320 aa). Positions 266–280 are enriched in polar residues; it reads STTSTFNHGSSTETP. A disordered region spans residues 266-285; that stretch reads STTSTFNHGSSTETPAENGL. 2 consecutive SIS domains span residues 387–526 and 559–704; these read WLTE…DLVS and CDKK…VDLP.

The enzyme catalyses D-fructose 6-phosphate + L-glutamine = D-glucosamine 6-phosphate + L-glutamate. Its pathway is nucleotide-sugar biosynthesis; UDP-N-acetyl-alpha-D-glucosamine biosynthesis; alpha-D-glucosamine 6-phosphate from D-fructose 6-phosphate: step 1/1. Its function is as follows. Involved in amino sugar synthesis (formation of chitin, supplies the amino sugars of asparagine-linked oligosaccharides of glycoproteins). This is Putative glutamine--fructose-6-phosphate aminotransferase [isomerizing] from Saccharomyces cerevisiae (strain YJM789) (Baker's yeast).